The following is a 585-amino-acid chain: Arginine--tRNA ligase (585 aa).

The 'HIGH' region motif lies at 131 to 141; the sequence is ANPTGPMHVGH.

This sequence belongs to the class-I aminoacyl-tRNA synthetase family. As to quaternary structure, monomer.

It is found in the cytoplasm. It catalyses the reaction tRNA(Arg) + L-arginine + ATP = L-arginyl-tRNA(Arg) + AMP + diphosphate. This Bartonella quintana (strain Toulouse) (Rochalimaea quintana) protein is Arginine--tRNA ligase.